The following is a 427-amino-acid chain: Peptidase B (427 aa).

2 residues coordinate Mn(2+): K195 and D200. Residue K207 is part of the active site. Mn(2+)-binding residues include D218, D277, and E279. The active site involves R281.

This sequence belongs to the peptidase M17 family. In terms of assembly, homohexamer. Mn(2+) is required as a cofactor.

Its subcellular location is the cytoplasm. The catalysed reaction is Release of an N-terminal amino acid, Xaa, from a peptide or arylamide. Xaa is preferably Glu or Asp but may be other amino acids, including Leu, Met, His, Cys and Gln.. Its function is as follows. Probably plays an important role in intracellular peptide degradation. This is Peptidase B from Shigella flexneri serotype 5b (strain 8401).